The primary structure comprises 428 residues: GTPase Obg (428 aa).

Residues Met1–Leu158 enclose the Obg domain. An OBG-type G domain is found at Ala159–Glu329. Residues Gly165–Ser172, Phe190–Thr194, Asp212–Gly215, Asn282–Asp285, and Ser310–Ile312 contribute to the GTP site. Positions 172 and 192 each coordinate Mg(2+). The region spanning Lys350–Glu428 is the OCT domain.

This sequence belongs to the TRAFAC class OBG-HflX-like GTPase superfamily. OBG GTPase family. Monomer. Requires Mg(2+) as cofactor.

Its subcellular location is the cytoplasm. In terms of biological role, an essential GTPase which binds GTP, GDP and possibly (p)ppGpp with moderate affinity, with high nucleotide exchange rates and a fairly low GTP hydrolysis rate. Plays a role in control of the cell cycle, stress response, ribosome biogenesis and in those bacteria that undergo differentiation, in morphogenesis control. This chain is GTPase Obg, found in Shouchella clausii (strain KSM-K16) (Alkalihalobacillus clausii).